Reading from the N-terminus, the 98-residue chain is PqqA binding protein (98 aa).

This sequence belongs to the PqqD family. In terms of assembly, monomer. Interacts with PqqE.

The protein operates within cofactor biosynthesis; pyrroloquinoline quinone biosynthesis. Functionally, functions as a PqqA binding protein and presents PqqA to PqqE, in the pyrroloquinoline quinone (PQQ) biosynthetic pathway. This Rhizobium meliloti (strain 1021) (Ensifer meliloti) protein is PqqA binding protein.